The chain runs to 265 residues: Methylthioribulose-1-phosphate dehydratase (265 aa).

C118 lines the substrate pocket. Zn(2+) contacts are provided by H136 and H138. The active-site Proton donor/acceptor is the E161. H226 is a Zn(2+) binding site.

The protein belongs to the aldolase class II family. MtnB subfamily. Zn(2+) serves as cofactor.

The protein localises to the cytoplasm. It catalyses the reaction 5-(methylsulfanyl)-D-ribulose 1-phosphate = 5-methylsulfanyl-2,3-dioxopentyl phosphate + H2O. Its pathway is amino-acid biosynthesis; L-methionine biosynthesis via salvage pathway; L-methionine from S-methyl-5-thio-alpha-D-ribose 1-phosphate: step 2/6. Its function is as follows. Catalyzes the dehydration of methylthioribulose-1-phosphate (MTRu-1-P) into 2,3-diketo-5-methylthiopentyl-1-phosphate (DK-MTP-1-P). The polypeptide is Methylthioribulose-1-phosphate dehydratase (Scheffersomyces stipitis (strain ATCC 58785 / CBS 6054 / NBRC 10063 / NRRL Y-11545) (Yeast)).